The primary structure comprises 63 residues: ATP synthase F(0) complex subunit 8 (63 aa).

Residues 8–24 form a helical membrane-spanning segment; that stretch reads MWLLTILSMLLTLFVLF. At lysine 57 the chain carries N6-acetyllysine.

This sequence belongs to the ATPase protein 8 family. As to quaternary structure, component of the ATP synthase complex composed at least of ATP5F1A/subunit alpha, ATP5F1B/subunit beta, ATP5MC1/subunit c (homooctomer), MT-ATP6/subunit a, MT-ATP8/subunit 8, ATP5ME/subunit e, ATP5MF/subunit f, ATP5MG/subunit g, ATP5MK/subunit k, ATP5MJ/subunit j, ATP5F1C/subunit gamma, ATP5F1D/subunit delta, ATP5F1E/subunit epsilon, ATP5PF/subunit F6, ATP5PB/subunit b, ATP5PD/subunit d, ATP5PO/subunit OSCP. ATP synthase complex consists of a soluble F(1) head domain (subunits alpha(3) and beta(3)) - the catalytic core - and a membrane F(0) domain - the membrane proton channel (subunits c, a, 8, e, f, g, k and j). These two domains are linked by a central stalk (subunits gamma, delta, and epsilon) rotating inside the F1 region and a stationary peripheral stalk (subunits F6, b, d, and OSCP). Interacts with PRICKLE3.

It localises to the mitochondrion membrane. In terms of biological role, subunit 8, of the mitochondrial membrane ATP synthase complex (F(1)F(0) ATP synthase or Complex V) that produces ATP from ADP in the presence of a proton gradient across the membrane which is generated by electron transport complexes of the respiratory chain. ATP synthase complex consist of a soluble F(1) head domain - the catalytic core - and a membrane F(1) domain - the membrane proton channel. These two domains are linked by a central stalk rotating inside the F(1) region and a stationary peripheral stalk. During catalysis, ATP synthesis in the catalytic domain of F(1) is coupled via a rotary mechanism of the central stalk subunits to proton translocation. In vivo, can only synthesize ATP although its ATP hydrolase activity can be activated artificially in vitro. Part of the complex F(0) domain. The protein is ATP synthase F(0) complex subunit 8 of Balaenoptera physalus (Fin whale).